We begin with the raw amino-acid sequence, 322 residues long: Ribosomal RNA small subunit methyltransferase H (322 aa).

S-adenosyl-L-methionine-binding positions include 43 to 45 (GGY), D60, F86, D104, and Q111.

Belongs to the methyltransferase superfamily. RsmH family.

It localises to the cytoplasm. The enzyme catalyses cytidine(1402) in 16S rRNA + S-adenosyl-L-methionine = N(4)-methylcytidine(1402) in 16S rRNA + S-adenosyl-L-homocysteine + H(+). Specifically methylates the N4 position of cytidine in position 1402 (C1402) of 16S rRNA. This is Ribosomal RNA small subunit methyltransferase H from Caulobacter sp. (strain K31).